The following is a 195-amino-acid chain: Ras-related protein Rab-31 (195 aa).

The GTP site is built by G16, G18, K19, S20, S21, D32, and H33. S20 serves as a coordination point for Mg(2+). 2 consecutive short sequence motifs (switch) follow at residues 30–42 and 63–79; these read HFDH…IGAS and AGQE…YRGS. S36 carries the post-translational modification Phosphoserine. Positions 38, 64, 119, 122, 150, and 151 each coordinate GTP. Position 38 (T38) interacts with Mg(2+). Positions 168 to 195 are disordered; sequence PPLGPQENGNSGGIKLGNQSLQASRRCC. Residues 184 to 195 show a composition bias toward polar residues; it reads GNQSLQASRRCC. 2 S-geranylgeranyl cysteine lipidation sites follow: C194 and C195.

This sequence belongs to the small GTPase superfamily. Rab family. Interacts with OCRL. Interacts (in GDP-bound form) with RIN3 and GAPVD1, which function as guanine exchange factors (GEF). Interacts with EGFR. Interacts with NGFR. Interacts (in GTP-bound form) with EEA1. Interacts (in GTP-bound form) with APPL2; interaction contributes to or enhances recruitment of APPL2 to the phagosomes; interaction enhances Fc-gamma receptor-mediated phagocytosis through PI3K/Akt signaling in macrophages. Mg(2+) is required as a cofactor. As to expression, detected in brain astrocytes (at protein level).

It is found in the early endosome. Its subcellular location is the golgi apparatus. The protein resides in the trans-Golgi network. The protein localises to the trans-Golgi network membrane. It localises to the cytoplasmic vesicle. It is found in the phagosome. Its subcellular location is the phagosome membrane. The catalysed reaction is GTP + H2O = GDP + phosphate + H(+). Its activity is regulated as follows. Regulated by guanine nucleotide exchange factors (GEFs) including RIN3 and GAPVD1 which promote the exchange of bound GDP for free GTP. Regulated by GTPase activating proteins (GAPs) which increase the GTP hydrolysis activity. Inhibited by GDP dissociation inhibitors (GDIs) which prevent Rab-GDP dissociation. Its function is as follows. The small GTPases Rab are key regulators of intracellular membrane trafficking, from the formation of transport vesicles to their fusion with membranes. Rabs cycle between an inactive GDP-bound form and an active GTP-bound form that is able to recruit to membranes different set of downstream effectors directly responsible for vesicle formation, movement, tethering and fusion. Required for the integrity and for normal function of the Golgi apparatus and the trans-Golgi network. Plays a role in insulin-stimulated translocation of GLUT4 to the cell membrane. Plays a role in the maturation of phagosomes that engulf pathogens, such as S.aureus and Mycobacterium. Plays a role in M6PR transport from the trans-Golgi network to endosomes. Plays a role in the internalization of EGFR from the cell membrane into endosomes. This is Ras-related protein Rab-31 from Mus musculus (Mouse).